We begin with the raw amino-acid sequence, 293 residues long: tRNA-cytidine(32) 2-sulfurtransferase (293 aa).

Positions 62-67 match the PP-loop motif motif; sequence SGGKDS. [4Fe-4S] cluster contacts are provided by Cys137, Cys140, and Cys228.

It belongs to the TtcA family. In terms of assembly, homodimer. Mg(2+) serves as cofactor. The cofactor is [4Fe-4S] cluster.

The protein localises to the cytoplasm. The enzyme catalyses cytidine(32) in tRNA + S-sulfanyl-L-cysteinyl-[cysteine desulfurase] + AH2 + ATP = 2-thiocytidine(32) in tRNA + L-cysteinyl-[cysteine desulfurase] + A + AMP + diphosphate + H(+). The protein operates within tRNA modification. Catalyzes the ATP-dependent 2-thiolation of cytidine in position 32 of tRNA, to form 2-thiocytidine (s(2)C32). The sulfur atoms are provided by the cysteine/cysteine desulfurase (IscS) system. The sequence is that of tRNA-cytidine(32) 2-sulfurtransferase from Brucella melitensis biotype 1 (strain ATCC 23456 / CCUG 17765 / NCTC 10094 / 16M).